An 887-amino-acid polypeptide reads, in one-letter code: Bifunctional uridylyltransferase/uridylyl-removing enzyme (887 aa).

The interval 1–337 (MINTSPLLNY…RLPNYERKIE (337 aa)) is uridylyltransferase. The uridylyl-removing stretch occupies residues 339–699 (VNDHFKIVDN…AHRKAAQDAV (361 aa)). The HD domain occupies 457 to 579 (VDAHTLLLLR…LGDMEHLDYL (123 aa)). ACT domains follow at residues 700–782 (QIFI…LMQR) and 809–887 (MVEI…ICQH).

It belongs to the GlnD family. Mg(2+) serves as cofactor.

The enzyme catalyses [protein-PII]-L-tyrosine + UTP = [protein-PII]-uridylyl-L-tyrosine + diphosphate. It catalyses the reaction [protein-PII]-uridylyl-L-tyrosine + H2O = [protein-PII]-L-tyrosine + UMP + H(+). Uridylyltransferase (UTase) activity is inhibited by glutamine, while glutamine activates uridylyl-removing (UR) activity. Its function is as follows. Modifies, by uridylylation and deuridylylation, the PII regulatory proteins (GlnB and homologs), in response to the nitrogen status of the cell that GlnD senses through the glutamine level. Under low glutamine levels, catalyzes the conversion of the PII proteins and UTP to PII-UMP and PPi, while under higher glutamine levels, GlnD hydrolyzes PII-UMP to PII and UMP (deuridylylation). Thus, controls uridylylation state and activity of the PII proteins, and plays an important role in the regulation of nitrogen assimilation and metabolism. This Acinetobacter baumannii (strain ACICU) protein is Bifunctional uridylyltransferase/uridylyl-removing enzyme.